We begin with the raw amino-acid sequence, 678 residues long: Serine/threonine-protein kinase PLK (678 aa).

The region spanning 22 to 309 (YRPGKLLGKG…VKECLDHSWL (288 aa)) is the Protein kinase domain. Residues 28-36 (LGKGGFAYV) and lysine 51 contribute to the ATP site. Aspartate 145 acts as the Proton acceptor in catalysis. Phosphothreonine; by autocatalysis occurs at positions 179 and 183. POLO box domains follow at residues 435 to 516 (YIMS…YLEN) and 563 to 644 (FLKK…IIKA). Residues 658–678 (KDSTKKSASGSSTRQLGQGGE) are disordered. Polar residues predominate over residues 663–678 (KSASGSSTRQLGQGGE).

This sequence belongs to the protein kinase superfamily. Ser/Thr protein kinase family. CDC5/Polo subfamily. Interacts with Kin-13. In terms of processing, autophosphorylated. Autophosphorylation is critical for its function in cell growth, cytokinesis and formation of flagella.

The protein localises to the cell projection. The protein resides in the cilium. It is found in the flagellum. It localises to the cytoplasm. Its subcellular location is the cytoskeleton. The protein localises to the flagellum basal body. The protein resides in the flagellum axoneme. It is found in the spindle. It localises to the membrane. It catalyses the reaction L-seryl-[protein] + ATP = O-phospho-L-seryl-[protein] + ADP + H(+). The catalysed reaction is L-threonyl-[protein] + ATP = O-phospho-L-threonyl-[protein] + ADP + H(+). Inhibited by GW843286X (GW), an ATP-competitive inhibitor. Inhibition leads to reduced growth, increased number of cells with more than four nuclei, increased number of cells with condensed nuclei, cell cycle arrest at G2/M or G1/S phase depending on the treatment time with GW, and increased length of membrane-bound portions of the caudal and anterior flagella. Involved in cell cycle. Involved in cell division. Involved in cytokinesis. Involved in flagella biogenesis and in regulation of flagella length in interphase. Involved in formation of median bodies during interphase. Phosphorylates Kin-13 in vitro. Likely regulates microtubule (MT) depolymerizing activity of Kin-13. The protein is Serine/threonine-protein kinase PLK of Giardia intestinalis (strain ATCC 50803 / WB clone C6) (Giardia lamblia).